We begin with the raw amino-acid sequence, 284 residues long: TnP I resolvase (284 aa).

The region spanning 1–84 (MDVAKQFSSY…SLAKFNEFLI (84 aa)) is the Core-binding (CB) domain. Positions 107-282 (ASPTQIVELD…NQLQLKNKME (176 aa)) constitute a Tyr recombinase domain. Catalysis depends on residues R145, K170, H234, R237, and H260. The active-site O-(3'-phospho-DNA)-tyrosine intermediate is Y269.

Belongs to the 'phage' integrase family.

Its function is as follows. Resolvase catalyzes the resolution (a site-specific recombination) of the cointegrated replicon to yield the final transposition products. The sequence is that of TnP I resolvase (tnpI) from Bacillus thuringiensis.